A 316-amino-acid chain; its full sequence is Ribosomal RNA small subunit methyltransferase H (316 aa).

Residues 35 to 37, aspartate 55, phenylalanine 84, aspartate 105, and glutamine 112 each bind S-adenosyl-L-methionine; that span reads AGH.

Belongs to the methyltransferase superfamily. RsmH family.

It localises to the cytoplasm. The catalysed reaction is cytidine(1402) in 16S rRNA + S-adenosyl-L-methionine = N(4)-methylcytidine(1402) in 16S rRNA + S-adenosyl-L-homocysteine + H(+). Its function is as follows. Specifically methylates the N4 position of cytidine in position 1402 (C1402) of 16S rRNA. The chain is Ribosomal RNA small subunit methyltransferase H from Streptococcus uberis (strain ATCC BAA-854 / 0140J).